The sequence spans 286 residues: Shikimate dehydrogenase (NADP(+)) (286 aa).

Residues 21–23 (TLS) and Thr-68 each bind shikimate. Catalysis depends on Lys-72, which acts as the Proton acceptor. Asp-84 serves as a coordination point for NADP(+). Residues Asn-93 and Asp-108 each coordinate shikimate. NADP(+) is bound by residues 132-136 (GYGGA) and Leu-226. Residue Tyr-228 coordinates shikimate. Gly-249 lines the NADP(+) pocket.

The protein belongs to the shikimate dehydrogenase family. Homodimer.

The enzyme catalyses shikimate + NADP(+) = 3-dehydroshikimate + NADPH + H(+). It functions in the pathway metabolic intermediate biosynthesis; chorismate biosynthesis; chorismate from D-erythrose 4-phosphate and phosphoenolpyruvate: step 4/7. Its function is as follows. Involved in the biosynthesis of the chorismate, which leads to the biosynthesis of aromatic amino acids. Catalyzes the reversible NADPH linked reduction of 3-dehydroshikimate (DHSA) to yield shikimate (SA). This chain is Shikimate dehydrogenase (NADP(+)), found in Thermosynechococcus vestitus (strain NIES-2133 / IAM M-273 / BP-1).